Reading from the N-terminus, the 588-residue chain is Zeta-carotene desaturase, chloroplastic/chromoplastic (588 aa).

Residues methionine 1 to arginine 49 constitute a chloroplast and chromoplast transit peptide.

It belongs to the zeta carotene desaturase family. As to quaternary structure, monomer and dimer. It depends on decylplastoquinone as a cofactor. 6-decylubiquinone serves as cofactor.

It is found in the plastid. The protein localises to the chloroplast. The protein resides in the chromoplast. The catalysed reaction is 9,9'-di-cis-zeta-carotene + 2 a quinone = 7,7',9,9'-tetra-cis-lycopene + 2 a quinol. Its pathway is carotenoid biosynthesis; lycopene biosynthesis. Catalyzes the conversion of zeta-carotene to lycopene via the intermediary of neurosporene. It carries out two consecutive desaturations (introduction of double bonds) at positions C-7 and C-7'. Shows stereoselectivity toward trans C15-C15'zeta-carotene double bond. The zeta-carotene produced by the phytoene desaturase PDS has a C15-C15' double bond in the cis configuration and it requires isomerization before being recognized as substrate by ZDS. No activity with all-trans-zeta-carotene. The main product is 7,9,7',9'-tetra-cis-lycopene (pro-lycopene). The polypeptide is Zeta-carotene desaturase, chloroplastic/chromoplastic (ZDS) (Capsicum annuum (Capsicum pepper)).